A 296-amino-acid polypeptide reads, in one-letter code: Glycine N-acyltransferase-like protein (296 aa).

At Lys41 the chain carries N6-acetyllysine; alternate. Lys41 carries the post-translational modification N6-succinyllysine; alternate. The residue at position 43 (Lys43) is an N6-acetyllysine. Lys48 bears the N6-acetyllysine; alternate mark. An N6-succinyllysine; alternate modification is found at Lys48. N6-acetyllysine occurs at positions 80 and 83. N6-acetyllysine; alternate is present on residues Lys183 and Lys256. N6-succinyllysine; alternate occurs at positions 183 and 256.

The protein belongs to the glycine N-acyltransferase family.

It localises to the mitochondrion. It carries out the reaction an acyl-CoA + glycine = an N-acylglycine + CoA + H(+). Its function is as follows. Mitochondrial acyltransferase which transfers the acyl group to the N-terminus of glycine. Can conjugate a multitude of substrates to form a variety of N-acylglycines. This Mus musculus (Mouse) protein is Glycine N-acyltransferase-like protein (Gm4952).